A 616-amino-acid polypeptide reads, in one-letter code: Cleavage stimulation factor subunit 2 tau variant (616 aa).

An RRM domain is found at 16–94; the sequence is RSVFVGNIPY…RALRVDNAAS (79 aa). 2 disordered regions span residues 203–241 and 262–418; these read GKSQ…QPQH and IPAP…SRAM. 2 stretches are compositionally biased toward low complexity: residues 223–233 and 319–331; these read PGPNVLLNQQN and VTPG…GLLG. Residue T320 is modified to Phosphothreonine. The segment covering 368–381 has biased composition (basic and acidic residues); the sequence is SGHDTRGPSSHEMR. The 1-1 repeat unit spans residues 418-422; that stretch reads METRA. The interval 418-462 is 9 X 5 AA tandem repeats of M-E-T-R-[AG]; sequence METRAMETEVLETRVMERRGMETCAMETRGMEARGMDARGLEMRG. The 1-2; approximate repeat unit spans residues 423-427; that stretch reads METEV. The stretch at 428–432 is one 1-3; approximate repeat; that stretch reads LETRV. One copy of the 1-4; approximate repeat lies at 433 to 437; that stretch reads MERRG. A 1-5; approximate repeat occupies 438-442; it reads METCA. A 1-6 repeat occupies 443-447; it reads METRG. Residues 448 to 452 form a 1-7; approximate repeat; sequence MEARG. The 1-8; approximate repeat unit spans residues 453–457; that stretch reads MDARG. Residues 458 to 462 form a 1-9; approximate repeat; it reads LEMRG. 4 consecutive repeat copies span residues 505–509, 510–514, 515–519, and 520–524. A 9 X 5 AA tandem repeats of G-[AT]-G-[MI]-Q region spans residues 505-549; it reads GAGMQGTGIQGTGMQGAGIQGGGMQGAGIQGVSIQGGGIQGGGIQ. The 2-5; approximate repeat unit spans residues 525-529; sequence GGGMQ. Residues 530–534 form a 2-6 repeat; that stretch reads GAGIQ. The stretch at 535 to 539 is one 2-7; approximate repeat; that stretch reads GVSIQ. The 2-8; approximate repeat unit spans residues 540 to 544; that stretch reads GGGIQ. Residues 542–573 are disordered; it reads GIQGGGIQGASKQGGSQPSSFSPGQSQVTPQD. The 2-9; approximate repeat unit spans residues 545–549; that stretch reads GGGIQ. Residues 550–568 are compositionally biased toward low complexity; it reads GASKQGGSQPSSFSPGQSQ. S563 bears the Phosphoserine mark.

Its subcellular location is the nucleus. Functionally, may play a significant role in AAUAAA-independent mRNA polyadenylation in germ cells. Directly involved in the binding to pre-mRNAs. This chain is Cleavage stimulation factor subunit 2 tau variant (CSTF2T), found in Homo sapiens (Human).